Reading from the N-terminus, the 627-residue chain is Protein fem-1 homolog B (627 aa).

4 ANK repeats span residues 45–74, 87–116, 120–149, and 153–182; these read QRST…VQTQ, DGAT…NVNH, TNST…NISI, and YDNT…DPNA. Residues His185, Cys186, and His218 each coordinate Zn(2+). 2 ANK repeats span residues 186 to 215 and 218 to 248; these read CGAT…AIVV and HGMT…DRRS. The stretch at 344 to 377 is one TPR repeat; it reads SHPIIYRGAVYADNMEFEQCIKLWLHALHLRQKG. ANK repeat units follow at residues 483–527 and 531–568; these read EGFT…EVNA and EGNS…HTDM.

The protein belongs to the fem-1 family. In terms of assembly, component of a CRL2 E3 ubiquitin-protein ligase complex, also named ECS (Elongin BC-CUL2/5-SOCS-box protein) complex, composed of CUL2, Elongin BC (ELOB and ELOC), RBX1 and substrate-specific adapter FEM1B. Homooligomer. Interacts with PPM1F and PHTF1. Interacts with the death domain of FAS/TNFRSF6 and TNFRSF1A. Interacts with CHEK1. Interacts with NKX3-1. In terms of tissue distribution, present in adult testis (at protein level).

It is found in the cytoplasm. It localises to the nucleus. It participates in protein modification; protein ubiquitination. Activity of the CRL2(FEM1B) complex toward FNIP1 is inhibited by BEX family proteins (BEX1, BEX2, BEX3 and/or BEX4) in absence of reductive stress. Mechanistically, BEX proteins act as pseudosubstrate inhibitors that associate with FEM1B via zinc in absence of reductive stress, thereby preventing association between FEM1B and FNIP1. In terms of biological role, substrate-recognition component of a Cul2-RING (CRL2) E3 ubiquitin-protein ligase complex of the DesCEND (destruction via C-end degrons) pathway, which recognizes a C-degron located at the extreme C terminus of target proteins, leading to their ubiquitination and degradation. The C-degron recognized by the DesCEND pathway is usually a motif of less than ten residues and can be present in full-length proteins, truncated proteins or proteolytically cleaved forms. The CRL2(FEM1B) complex specifically recognizes proteins ending with -Gly-Leu-Asp-Arg, such as CDK5R1, leading to their ubiquitination and degradation. Also acts as a regulator of the reductive stress response by mediating ubiquitination of reduced FNIP1: in response to reductive stress, the CRL2(FEM1B) complex specifically recognizes a conserved Cys degron in FNIP1 when this degron is reduced, leading to FNIP1 degradation and subsequent activation of mitochondria to recalibrate reactive oxygen species (ROS). Mechanistically, recognizes and binds reduced FNIP1 through two interface zinc ions, which act as a molecular glue that recruit reduced FNIP1 to FEM1B. Promotes ubiquitination of GLI1, suppressing GLI1 transcriptional activator activity. Promotes ubiquitination and degradation of ANKRD37. Promotes ubiquitination and degradation of SLBP. Involved in apoptosis by acting as a death receptor-associated protein that mediates apoptosis. Also involved in glucose homeostasis in pancreatic islet. May also act as an adapter/mediator in replication stress-induced signaling that leads to the activation of CHEK1. The polypeptide is Protein fem-1 homolog B (Rattus norvegicus (Rat)).